The chain runs to 584 residues: Proteasome-associated ATPase (584 aa).

A coiled-coil region spans residues 8-90; it reads RHAERDRDEL…KEEVDRLSQP (83 aa). 272–277 provides a ligand contact to ATP; sequence GCGKTL. Positions 583–584 are docks into pockets in the proteasome alpha-ring; the sequence is YL.

Belongs to the AAA ATPase family. In terms of assembly, homohexamer. Assembles into a hexameric ring structure that caps the 20S proteasome core. Strongly interacts with the prokaryotic ubiquitin-like protein Pup through a hydrophobic interface; the interacting region of ARC lies in its N-terminal coiled-coil domain. There is one Pup binding site per ARC hexamer ring. Upon ATP-binding, the C-terminus of ARC interacts with the alpha-rings of the proteasome core, possibly by binding to the intersubunit pockets.

It functions in the pathway protein degradation; proteasomal Pup-dependent pathway. Its function is as follows. ATPase which is responsible for recognizing, binding, unfolding and translocation of pupylated proteins into the bacterial 20S proteasome core particle. May be essential for opening the gate of the 20S proteasome via an interaction with its C-terminus, thereby allowing substrate entry and access to the site of proteolysis. Thus, the C-termini of the proteasomal ATPase may function like a 'key in a lock' to induce gate opening and therefore regulate proteolysis. This is Proteasome-associated ATPase from Thermobifida fusca (strain YX).